Consider the following 225-residue polypeptide: Cytochrome b6-f complex iron-sulfur subunit, chloroplastic (225 aa).

A chloroplast-targeting transit peptide spans 1–46 (MASTALSTASNPTQLCRSRASLGKPVKGLGFGRERVPRTATTITCQ). The chain crosses the membrane as a helical span at residues 69-89 (LLGAISLPTVGMLVPYGAFFI). Positions 112 to 208 (AEEWLKTHGP…ADVDDGKVLF (97 aa)) constitute a Rieske domain. [2Fe-2S] cluster is bound by residues cysteine 154, histidine 156, cysteine 172, and histidine 175. A disulfide bridge links cysteine 159 with cysteine 174.

The protein belongs to the Rieske iron-sulfur protein family. The 4 large subunits of the cytochrome b6-f complex are cytochrome b6, subunit IV (17 kDa polypeptide, petD), cytochrome f and the Rieske protein, while the 4 small subunits are petG, petL, petM and petN. The complex functions as a dimer. Requires [2Fe-2S] cluster as cofactor.

It localises to the plastid. It is found in the chloroplast thylakoid membrane. It catalyses the reaction 2 oxidized [plastocyanin] + a plastoquinol + 2 H(+)(in) = 2 reduced [plastocyanin] + a plastoquinone + 4 H(+)(out). Component of the cytochrome b6-f complex, which mediates electron transfer between photosystem II (PSII) and photosystem I (PSI), cyclic electron flow around PSI, and state transitions. The sequence is that of Cytochrome b6-f complex iron-sulfur subunit, chloroplastic (petC) from Oryza sativa subsp. japonica (Rice).